We begin with the raw amino-acid sequence, 718 residues long: Putative proline-rich receptor-like protein kinase PERK11 (718 aa).

A disordered region spans residues 1-256 (MDKVQQQADL…GGTSQQSNES (256 aa)). Topologically, residues 1-262 (MDKVQQQADL…SNESNYTEKT (262 aa)) are extracellular. Pro residues-rich tracts occupy residues 45–105 (ATSP…PPQS), 115–132 (IPFP…PPPS), and 157–167 (LPSPPSTPFSP). Low complexity-rich tracts occupy residues 168-203 (PSQE…LQPL) and 211-244 (SNRV…ANSN). 3 N-linked (GlcNAc...) asparagine glycosylation sites follow: N231, N254, and N257. Residues 263–283 (VIGIGIAGVLVILFIAGVFFV) traverse the membrane as a helical segment. Topologically, residues 284–718 (RRKQKKGSSS…RAFNTSHRNH (435 aa)) are cytoplasmic. Positions 314–348 (HYRQKPGNGNSSAQNSSPDTNSLGNPKHGRGTPDS) are disordered. Residues 320–337 (GNGNSSAQNSSPDTNSLG) show a composition bias toward polar residues. At T359 the chain carries Phosphothreonine. The Protein kinase domain maps to 370–649 (FCKSFVVGEG…VRALDTRDDL (280 aa)). Residues 376 to 384 (VGEGGFGCV) and K398 each bind ATP. The residue at position 443 (Y443) is a Phosphotyrosine. D494 (proton acceptor) is an active-site residue. S498 and S527 each carry phosphoserine. A phosphothreonine mark is found at T528 and T533. Position 541 is a phosphotyrosine (Y541). Residues 683–718 (SSDLGTNTGYYPSQDYATSHEYESESRAFNTSHRNH) are disordered. 2 stretches are compositionally biased toward polar residues: residues 685–699 (DLGT…QDYA) and 709–718 (RAFNTSHRNH).

Belongs to the protein kinase superfamily. Ser/Thr protein kinase family. In terms of tissue distribution, mostly expressed in flower buds.

The protein resides in the cell membrane. It catalyses the reaction L-seryl-[protein] + ATP = O-phospho-L-seryl-[protein] + ADP + H(+). The catalysed reaction is L-threonyl-[protein] + ATP = O-phospho-L-threonyl-[protein] + ADP + H(+). The polypeptide is Putative proline-rich receptor-like protein kinase PERK11 (PERK11) (Arabidopsis thaliana (Mouse-ear cress)).